A 72-amino-acid polypeptide reads, in one-letter code: ATP synthase subunit L (72 aa).

As to quaternary structure, F-type ATP synthases have 2 components, the catalytic core F(1) and the membrane-embedded component F(0), linked together by a central stalk and a peripheral stalk. The central stalk, also called rotor shaft, is often seen as part of F(1). The peripheral stalk is seen as part of F(0). F(0) contains the membrane channel next to the rotor. F-type ATP synthases form dimers but each monomer functions independently in ATP generation. The dimer consists of 18 different polypeptides: ATP1 (subunit alpha, part of F(1), 3 molecules per monomer), ATP2 (subunit beta, part of F(1), 3 molecules per monomer), ATP3 (subunit gamma, part of the central stalk), ATP4 (subunit b, part of the peripheral stalk), ATP5/OSCP (subunit 5/OSCP, part of the peripheral stalk), ATP6 (subunit a, part of the peripheral stalk), ATP7 (subunit d, part of the peripheral stalk), ATP8 (subunit 8, part of the peripheral stalk), OLI1 (subunit c, part of the rotor, 10 molecules per monomer), ATP14 (subunit h, part of the peripheral stalk), ATP15 (subunit epsilon, part of the central stalk), ATP16 (subunit delta, part of the central stalk), ATP17 (subunit f, part of the peripheral stalk), ATP18 (subunit i/j, part of the peripheral stalk). Dimer-specific subunits are ATP19 (subunit k, at interface between monomers), ATP20 (subunit g, at interface between monomers), TIM11 (subunit e, at interface between monomers). Also contains subunit L.

It localises to the mitochondrion inner membrane. Its function is as follows. Mitochondrial membrane ATP synthase (F(1)F(0) ATP synthase or Complex V) produces ATP from ADP in the presence of a proton gradient across the membrane which is generated by electron transport complexes of the respiratory chain. F-type ATP synthases consist of two structural domains, F(1) - containing the extramembraneous catalytic core, and F(0) - containing the membrane proton channel, linked together by a central stalk and a peripheral stalk. During catalysis, ATP synthesis in the catalytic domain of F(1) is coupled via a rotary mechanism of the central stalk subunits to proton translocation. This chain is ATP synthase subunit L, found in Pichia angusta (Yeast).